The chain runs to 241 residues: NAD(P)H-hydrate epimerase (241 aa).

The YjeF N-terminal domain occupies alanine 11–cysteine 221. Residue asparagine 65 to aspartate 69 coordinates (6S)-NADPHX. Positions 66 and 127 each coordinate K(+). (6S)-NADPHX contacts are provided by residues glycine 131–proline 137 and aspartate 160. Serine 163 lines the K(+) pocket.

It belongs to the NnrE/AIBP family. The cofactor is K(+).

The protein localises to the cytoplasm. Its subcellular location is the mitochondrion. It catalyses the reaction (6R)-NADHX = (6S)-NADHX. The catalysed reaction is (6R)-NADPHX = (6S)-NADPHX. In terms of biological role, catalyzes the epimerization of the S- and R-forms of NAD(P)HX, a damaged form of NAD(P)H that is a result of enzymatic or heat-dependent hydration. This is a prerequisite for the S-specific NAD(P)H-hydrate dehydratase to allow the repair of both epimers of NAD(P)HX. The chain is NAD(P)H-hydrate epimerase from Aspergillus fumigatus (strain ATCC MYA-4609 / CBS 101355 / FGSC A1100 / Af293) (Neosartorya fumigata).